The following is a 378-amino-acid chain: Erythronate-4-phosphate dehydrogenase (378 aa).

Residues serine 45 and threonine 66 each contribute to the substrate site. Residues aspartate 146 and threonine 175 each coordinate NAD(+). Arginine 208 is a catalytic residue. NAD(+) is bound at residue aspartate 232. The active site involves glutamate 237. The active-site Proton donor is the histidine 254. Residue glycine 257 coordinates NAD(+). Tyrosine 258 is a binding site for substrate.

This sequence belongs to the D-isomer specific 2-hydroxyacid dehydrogenase family. PdxB subfamily. As to quaternary structure, homodimer.

The protein resides in the cytoplasm. It catalyses the reaction 4-phospho-D-erythronate + NAD(+) = (R)-3-hydroxy-2-oxo-4-phosphooxybutanoate + NADH + H(+). Its pathway is cofactor biosynthesis; pyridoxine 5'-phosphate biosynthesis; pyridoxine 5'-phosphate from D-erythrose 4-phosphate: step 2/5. Functionally, catalyzes the oxidation of erythronate-4-phosphate to 3-hydroxy-2-oxo-4-phosphonooxybutanoate. The sequence is that of Erythronate-4-phosphate dehydrogenase from Escherichia coli (strain 55989 / EAEC).